The primary structure comprises 341 residues: Serine/threonine-protein kinase PDIK1L (341 aa).

The Protein kinase domain maps to 8–334 (YDLIREVGRG…LELRLVQIAF (327 aa)). Residues 14–22 (VGRGSYGVV) and Lys37 each bind ATP. The active-site Proton acceptor is Asp164.

The protein belongs to the protein kinase superfamily. Ser/Thr protein kinase family.

The protein localises to the nucleus. The enzyme catalyses L-seryl-[protein] + ATP = O-phospho-L-seryl-[protein] + ADP + H(+). It carries out the reaction L-threonyl-[protein] + ATP = O-phospho-L-threonyl-[protein] + ADP + H(+). This Mus musculus (Mouse) protein is Serine/threonine-protein kinase PDIK1L (Pdik1l).